A 302-amino-acid chain; its full sequence is GrpE protein homolog 1, mitochondrial (302 aa).

A mitochondrion-targeting transit peptide spans 1-39 (MLVSRVLSRVSRSAGLRSSFSSVVTPKRNQIPIVASRFH). The disordered stretch occupies residues 77-97 (SAEPKGNESNTEVPKTGETSE).

Belongs to the GrpE family. Probable component of the PAM complex, at least composed of SSC1 (mtHsp70), MGE1, TIM44, PAM16/TIM16, PAM17 and PAM18/TIM14. Interacts with SSQ1.

Its subcellular location is the mitochondrion matrix. In terms of biological role, essential component of the PAM complex, a complex required for the translocation of transit peptide-containing proteins from the inner membrane into the mitochondrial matrix in an ATP-dependent manner. Seems to control the nucleotide-dependent binding of mitochondrial HSP70 to substrate proteins. Binds ATP. Interacts with copper ions Cu(2+). This chain is GrpE protein homolog 1, mitochondrial, found in Arabidopsis thaliana (Mouse-ear cress).